The sequence spans 108 residues: Protein SMALL AUXIN UP-REGULATED RNA 51 (108 aa).

Belongs to the ARG7 family. Expressed in organ primordia. Hardly observed in leaves.

The protein resides in the cell membrane. Functionally, provide a mechanistic link between auxin and plasma membrane H(+)-ATPases (PM H(+)-ATPases, e.g. AHA1 and AHA2), and triggers PM H(+)-ATPases activity by promoting phosphorylation of their C-terminal autoinhibitory domain as a result of PP2C-D subfamily of type 2C phosphatases inhibition, thus leading to the acidification of the apoplast and the facilitation of solutes and water uptake to drive cell expansion. Triggers plant growth probably by promoting cell elongation. Regulates branch angles and bending. In Arabidopsis thaliana (Mouse-ear cress), this protein is Protein SMALL AUXIN UP-REGULATED RNA 51.